A 634-amino-acid polypeptide reads, in one-letter code: Probable potassium transport system protein Kup 2 (634 aa).

A run of 12 helical transmembrane segments spans residues 20–40 (FWTL…TSPL), 64–84 (VLSL…VLLI), 110–130 (FAAI…DAII), 148–168 (PGFD…LFLV), 174–194 (AAVA…MAVA), 224–244 (AGLL…ALYA), 258–278 (WLVL…AMLL), 290–310 (LLFP…ATII), 348–368 (IYIP…VFAF), 377–397 (AYGI…FFVM), 405–425 (AAVA…FLMA), and 430–450 (IVDG…VMVT).

The protein belongs to the HAK/KUP transporter (TC 2.A.72) family.

It is found in the cell inner membrane. The enzyme catalyses K(+)(in) + H(+)(in) = K(+)(out) + H(+)(out). In terms of biological role, transport of potassium into the cell. Likely operates as a K(+):H(+) symporter. The polypeptide is Probable potassium transport system protein Kup 2 (Rhodopseudomonas palustris (strain ATCC BAA-98 / CGA009)).